A 44-amino-acid chain; its full sequence is Photosystem I reaction center subunit IX 2 (44 aa).

Residues 13 to 35 (APVLATLWLSSTAVILIGVNSYF) traverse the membrane as a helical segment.

The protein belongs to the PsaJ family.

It localises to the cellular thylakoid membrane. Functionally, may help in the organization of the PsaE and PsaF subunits. The chain is Photosystem I reaction center subunit IX 2 (psaJ2) from Prochlorococcus marinus (strain NATL2A).